The sequence spans 257 residues: Snake venom serine protease 2C (257 aa).

Residues 1 to 18 (MVLIRVLANLLILQLSYA) form the signal peptide. The propeptide occupies 19-24 (QKSSEL). One can recognise a Peptidase S1 domain in the interval 25-248 (VIGGHPCNIN…HLDWIKSIIA (224 aa)). Disulfide bonds link Cys31–Cys162, Cys49–Cys65, Cys97–Cys255, Cys141–Cys209, Cys173–Cys188, and Cys199–Cys224. Residues His64 and Asp109 each act as charge relay system in the active site. N-linked (GlcNAc...) asparagine glycans are attached at residues Asn116, Asn120, and Asn121. The Charge relay system role is filled by Ser203.

The protein belongs to the peptidase S1 family. Snake venom subfamily. In terms of assembly, monomer. In terms of tissue distribution, expressed by the venom gland.

The protein resides in the secreted. In terms of biological role, snake venom serine protease that may act in the hemostasis system of the prey. This Craspedocephalus gramineus (Bamboo pit viper) protein is Snake venom serine protease 2C (TLG2C).